The chain runs to 503 residues: Probable dolichyl pyrophosphate Man9GlcNAc2 alpha-1,3-glucosyltransferase (503 aa).

Over 1 to 46 the chain is Cytoplasmic; it reads MKERIKDKAWRPQFIKLNNPDTSKKIVSQKSKKPEIVDLSSPGNND. The chain crosses the membrane as a helical span at residues 47-67; sequence LVTISILCVLLCFQLAISLNP. Over 68–151 the chain is Lumenal; that stretch reads HSGESQPPMY…SRGYESIAHK (84 aa). A helical membrane pass occupies residues 152 to 172; sequence LFMRLSAIIPFYIFYLPPLIF. Topologically, residues 173–181 are cytoplasmic; the sequence is YFTRSKKMS. A helical membrane pass occupies residues 182-202; the sequence is PILYALALLYPSLLVIDNGHF. Residues 203 to 211 lie on the Lumenal side of the membrane; the sequence is QYNSISLGL. Residues 212-232 form a helical membrane-spanning segment; sequence FLATYMFLTKNFTIIGSILFV. Topologically, residues 233–239 are cytoplasmic; sequence AALNYKQ. The chain crosses the membrane as a helical span at residues 240-257; the sequence is MELYHALPVFVFILARSI. Over 258 to 268 the chain is Lumenal; it reads NKTQLFNSFRR. A helical transmembrane segment spans residues 269–289; sequence ILTIGLFVVGTFLIIWLPFLL. The Cytoplasmic segment spans residues 290–332; that stretch reads TGTAKDVIIRVFPFNRGLYEDKVASFWCAFSFILKRLPLQSVQ. The helical transmembrane segment at 333 to 353 threads the bilayer; the sequence is IYISTALVLAGSAPSLLVLFL. Residues 354-359 lie on the Lumenal side of the membrane; that stretch reads RPTEKQ. The chain crosses the membrane as a helical span at residues 360–379; the sequence is FRISLTATGLSFFLFSFHVH. Residues 380–382 lie on the Cytoplasmic side of the membrane; sequence EKT. Residues 383 to 403 traverse the membrane as a helical segment; the sequence is ILLAAVPALLLISEYTSLVIW. Over 404 to 420 the chain is Lumenal; it reads FLNITNISIFSLCVKDN. The chain crosses the membrane as a helical span at residues 421 to 441; it reads FALSLSFFFAYFVVSYAYTAP. At 442–443 the chain is on the cytoplasmic side; sequence RK. A helical transmembrane segment spans residues 444–464; sequence ISHILTILIGFAICILELYGP. The Lumenal portion of the chain corresponds to 465-474; that stretch reads SNQRFPHIYQ. A helical transmembrane segment spans residues 475-495; it reads LANAFFSCVHFIYFLLYLSFA. The Cytoplasmic segment spans residues 496–503; that stretch reads SFEKTKKE.

The protein belongs to the ALG6/ALG8 glucosyltransferase family.

The protein resides in the endoplasmic reticulum membrane. It carries out the reaction an alpha-D-Man-(1-&gt;2)-alpha-D-Man-(1-&gt;2)-alpha-D-Man-(1-&gt;3)-[alpha-D-Man-(1-&gt;2)-alpha-D-Man-(1-&gt;3)-[alpha-D-Man-(1-&gt;2)-alpha-D-Man-(1-&gt;6)]-alpha-D-Man-(1-&gt;6)]-beta-D-Man-(1-&gt;4)-beta-D-GlcNAc-(1-&gt;4)-alpha-D-GlcNAc-diphospho-di-trans,poly-cis-dolichol + a di-trans,poly-cis-dolichyl beta-D-glucosyl phosphate = an alpha-D-Glc-(1-&gt;3)-alpha-D-Man-(1-&gt;2)-alpha-D-Man-(1-&gt;2)-alpha-D-Man-(1-&gt;3)-[alpha-D-Man-(1-&gt;2)-alpha-D-Man-(1-&gt;3)-[alpha-D-Man-(1-&gt;2)-alpha-D-Man-(1-&gt;6)]-alpha-D-Man-(1-&gt;6)]-beta-D-Man-(1-&gt;4)-beta-D-GlcNAc-(1-&gt;4)-alpha-D-GlcNAc-diphospho-di-trans,poly-cis-dolichol + a di-trans,poly-cis-dolichyl phosphate + H(+). It functions in the pathway protein modification; protein glycosylation. Adds the first glucose residue to the lipid-linked oligosaccharide precursor for N-linked glycosylation. Transfers glucose from dolichyl phosphate glucose (Dol-P-Glc) onto the lipid-linked oligosaccharide Man(9)GlcNAc(2)-PP-Dol. This chain is Probable dolichyl pyrophosphate Man9GlcNAc2 alpha-1,3-glucosyltransferase, found in Caenorhabditis elegans.